We begin with the raw amino-acid sequence, 831 residues long: Periplasmic nitrate reductase (831 aa).

Residues 1-31 (MTISRRDLLKAQAAGIAAMAANIPLSSQAPA) constitute a signal peptide (tat-type signal). A 4Fe-4S Mo/W bis-MGD-type domain is found at 41 to 97 (ITWSKAPCRFCGTGCGVMVGVKEGRVVATHGDLLAEVNRGLNCVKGYFLSKIMYGAD). [4Fe-4S] cluster contacts are provided by Cys48, Cys51, Cys55, and Cys83. Residues Lys85, Gln152, Asn177, Cys181, 214-221 (WGSNMAEM), 245-249 (STFTH), 264-266 (GTD), Met375, Gln379, Asn485, 511-512 (SD), Lys534, Asp561, and 721-730 (TGRVLEHWHS) contribute to the Mo-bis(molybdopterin guanine dinucleotide) site. Trp797 provides a ligand contact to substrate. The Mo-bis(molybdopterin guanine dinucleotide) site is built by Asn805 and Lys822.

Belongs to the prokaryotic molybdopterin-containing oxidoreductase family. NasA/NapA/NarB subfamily. In terms of assembly, component of the periplasmic nitrate reductase NapAB complex composed of NapA and NapB. It depends on [4Fe-4S] cluster as a cofactor. The cofactor is Mo-bis(molybdopterin guanine dinucleotide). Predicted to be exported by the Tat system. The position of the signal peptide cleavage has not been experimentally proven.

It localises to the periplasm. The enzyme catalyses 2 Fe(II)-[cytochrome] + nitrate + 2 H(+) = 2 Fe(III)-[cytochrome] + nitrite + H2O. Its function is as follows. Catalytic subunit of the periplasmic nitrate reductase complex NapAB. Receives electrons from NapB and catalyzes the reduction of nitrate to nitrite. This is Periplasmic nitrate reductase from Paracoccus pantotrophus (Thiosphaera pantotropha).